The primary structure comprises 237 residues: Large ribosomal subunit protein uL3 (237 aa).

Disordered regions lie at residues 133–155 and 213–237; these read ASHG…DPGK and PENA…EGGE. Positions 135 to 150 are enriched in polar residues; sequence HGNSITHRSHGSTGQR. Gln-151 carries the N5-methylglutamine modification. Low complexity predominate over residues 220–237; that stretch reads AGLRAGAKAEAAATEGGE.

It belongs to the universal ribosomal protein uL3 family. Part of the 50S ribosomal subunit. Forms a cluster with proteins L14 and L19. In terms of processing, methylated by PrmB.

Its function is as follows. One of the primary rRNA binding proteins, it binds directly near the 3'-end of the 23S rRNA, where it nucleates assembly of the 50S subunit. The polypeptide is Large ribosomal subunit protein uL3 (Brucella abortus (strain S19)).